A 424-amino-acid chain; its full sequence is Myb family transcription factor RLI1 (424 aa).

The tract at residues Arg144–Gln165 is disordered. Residues Ala238–Tyr298 enclose the HTH myb-type domain. A DNA-binding region (H-T-H motif) is located at residues Pro269–Arg294. The stretch at Met326–Ala391 forms a coiled coil. Residues Leu342–Glu347 carry the LHEQLE motif.

The protein belongs to the MYB-CC family. Interacts with SPX1 and SPX2 in the nucleus; these interactions prevent binding to the promoters of target genes, thus regulating negatively leaf inclination in response to phosphate (Pi) starvation. In terms of assembly, homodimer. Interacts with PHR2 in the nucleus. As to expression, mostly expressed in roots and leaves blades and, to a lower extent, in leaves sheaths, culms and panicles. Localized in leaves lamina joints. In terms of tissue distribution, expressed equally in shoots and roots. Mostly expressed in shoots and, to a lower extent, in roots.

The protein resides in the nucleus. Its function is as follows. Transcription factor binding to specific DNA sequences of target genes promoters, such as the motif R1BS 5'-NAKATNCN-3' and the motif P1BS 5'-GNATATNC-3' to trigger their expression. Nitrate-induced component involved in modulating phosphate (Pi) response and homeostasis together with PHR2; activates directly the expression of Pi starvation-induced (PSI) genes upon nitrate disponibility, thus triggering the nitrate-induced phosphate response (NIPR) promoting Pi uptake activity. Functionally, binds preferentially to the P1BS motif 5'-GNATATNC-3' in target genes promoters. In terms of biological role, binds preferentially to the R1BS motif 5'-NAKATNCN-3' in target genes promoters, including several genes involved in the plant hormone signal transduction pathway. Involved in the shoot architecture; positively regulates leaf inclination by affecting lamina joint cell elongation via the direct promotion of ILI4/BU1 and BC1 genes expression, especially in response to phosphate (Pi) availability. Regulates both brassinolide (BL) biosynthesis and signaling by directly activating BL-biosynthesis and signaling genes. This chain is Myb family transcription factor RLI1, found in Oryza sativa subsp. japonica (Rice).